Reading from the N-terminus, the 239-residue chain is Heptaprenylglyceryl phosphate synthase (239 aa).

Lys12 is a sn-glycerol 1-phosphate binding site. The Mg(2+) site is built by Asp14 and Thr40. Sn-glycerol 1-phosphate contacts are provided by residues 159-164, Gly189, and 209-210; these read YLEYSG and GN.

This sequence belongs to the GGGP/HepGP synthase family. Group I subfamily. Homodimer. It depends on Mg(2+) as a cofactor.

The enzyme catalyses sn-glycerol 1-phosphate + all-trans-heptaprenyl diphosphate = 3-heptaprenyl-sn-glycero-1-phosphate + diphosphate. The protein operates within membrane lipid metabolism; glycerophospholipid metabolism. Functionally, prenyltransferase that catalyzes in vivo the transfer of the heptaprenyl moiety of heptaprenyl pyrophosphate (HepPP; 35 carbon atoms) to the C3 hydroxyl of sn-glycerol-1-phosphate (G1P), producing heptaprenylglyceryl phosphate (HepGP). This reaction is an ether-bond-formation step in the biosynthesis of archaea-type G1P-based membrane lipids found in Bacillales. To a much lesser extent, is also able to use geranylgeranyl diphosphate (GGPP; C20) as the prenyl donor. The sequence is that of Heptaprenylglyceryl phosphate synthase from Geobacillus kaustophilus (strain HTA426).